The primary structure comprises 101 residues: NAD(P)H-quinone oxidoreductase subunit 4L, chloroplastic (101 aa).

3 consecutive transmembrane segments (helical) span residues 2-22 (IFQS…YGLL), 32-52 (MSLE…SNFV), and 61-81 (VLAL…LAII).

Belongs to the complex I subunit 4L family. NDH is composed of at least 16 different subunits, 5 of which are encoded in the nucleus.

It localises to the plastid. It is found in the chloroplast thylakoid membrane. The enzyme catalyses a plastoquinone + NADH + (n+1) H(+)(in) = a plastoquinol + NAD(+) + n H(+)(out). It catalyses the reaction a plastoquinone + NADPH + (n+1) H(+)(in) = a plastoquinol + NADP(+) + n H(+)(out). Functionally, NDH shuttles electrons from NAD(P)H:plastoquinone, via FMN and iron-sulfur (Fe-S) centers, to quinones in the photosynthetic chain and possibly in a chloroplast respiratory chain. The immediate electron acceptor for the enzyme in this species is believed to be plastoquinone. Couples the redox reaction to proton translocation, and thus conserves the redox energy in a proton gradient. In Nephroselmis olivacea (Green alga), this protein is NAD(P)H-quinone oxidoreductase subunit 4L, chloroplastic.